The following is a 157-amino-acid chain: Ribosomal RNA large subunit methyltransferase H (157 aa).

S-adenosyl-L-methionine-binding positions include Leu73, Gly104, and 121–126 (LSPLTL).

The protein belongs to the RNA methyltransferase RlmH family. Homodimer.

Its subcellular location is the cytoplasm. The enzyme catalyses pseudouridine(1915) in 23S rRNA + S-adenosyl-L-methionine = N(3)-methylpseudouridine(1915) in 23S rRNA + S-adenosyl-L-homocysteine + H(+). Specifically methylates the pseudouridine at position 1915 (m3Psi1915) in 23S rRNA. The protein is Ribosomal RNA large subunit methyltransferase H of Acidithiobacillus ferrooxidans (strain ATCC 23270 / DSM 14882 / CIP 104768 / NCIMB 8455) (Ferrobacillus ferrooxidans (strain ATCC 23270)).